A 471-amino-acid polypeptide reads, in one-letter code: Glutamate--tRNA ligase (471 aa).

The 'HIGH' region signature appears at Pro9–Gly19. Residues Cys98, Cys100, Cys125, and His127 each coordinate Zn(2+). A 'KMSKS' region motif is present at residues Lys237–Arg241. ATP is bound at residue Lys240.

Belongs to the class-I aminoacyl-tRNA synthetase family. Glutamate--tRNA ligase type 1 subfamily. Monomer. The cofactor is Zn(2+).

The protein resides in the cytoplasm. It carries out the reaction tRNA(Glu) + L-glutamate + ATP = L-glutamyl-tRNA(Glu) + AMP + diphosphate. Functionally, catalyzes the attachment of glutamate to tRNA(Glu) in a two-step reaction: glutamate is first activated by ATP to form Glu-AMP and then transferred to the acceptor end of tRNA(Glu). The polypeptide is Glutamate--tRNA ligase (Salmonella dublin (strain CT_02021853)).